The primary structure comprises 705 residues: MKKYLAITSKGLENLLADELIALGVTDPKVVHAGVKFEAPIEVVYRCCLWSRIASRFIQILSEFDVRDDMDLYLGASSINWPSYFSADKTLVVDFNGTNREIRNSQYGALKVKDAIVDRFTKADLARPNISKVEPDLRVHMRLSGEKGILGFDLVGSGLHQRGYRTEAGRAPLRETLAAALVMRSTWDESKPLLDPMCGSGTLLIEAALMACEMAPGVKREKWCFEALNDFDAELWAEIRSEARVKSRRGVKKVDARFYGFDRDYRVIQTARENARRAGVEDLITFDVGDATKVECPEGFENGVILCNPPYGERLSTEPALIALYSEFGRQLKEVFGGCTASIYSSNDDLLACLRMRADKQFKLNNGALPCVQKNYSITESAERKEAVSIEVAPEFMNRLKKNIGKIGKWARKEKLDCYRIYDADLPDYNAAIDVYKDYIIIQEYAAPKTISEDKARRRLTDMIRATVLVTGVETNNVILKVRQKQSGKNQYQKLAEKSRYFDVEEYGVKLIVNLQDYLDTGLFLDHKLTRKMLGEIAAGKDFLNLFAYTGSATVHAACGGAKSTMTIDMSRTYLEWAQKNMNTNGQTGTQHQFLQADCLQWLQQADGEFDLIFIDPPTFSNSKRMEQTFDVQRDHIMLLENLKRMLRENGTIVFSNNKRNFKMDEAGLEKAGLKAKNISKQTLPLDFARNKHIHNCWIITHKED.

Residues 43-154 (VVYRCCLWSR…GEKGILGFDL (112 aa)) enclose the THUMP domain.

The protein belongs to the methyltransferase superfamily. RlmKL family.

The protein resides in the cytoplasm. The enzyme catalyses guanosine(2445) in 23S rRNA + S-adenosyl-L-methionine = N(2)-methylguanosine(2445) in 23S rRNA + S-adenosyl-L-homocysteine + H(+). It carries out the reaction guanosine(2069) in 23S rRNA + S-adenosyl-L-methionine = N(2)-methylguanosine(2069) in 23S rRNA + S-adenosyl-L-homocysteine + H(+). Its function is as follows. Specifically methylates the guanine in position 2445 (m2G2445) and the guanine in position 2069 (m7G2069) of 23S rRNA. This is Ribosomal RNA large subunit methyltransferase K/L from Aliivibrio fischeri (strain ATCC 700601 / ES114) (Vibrio fischeri).